The following is a 148-amino-acid chain: Ribonuclease H (148 aa).

The region spanning 1-142 is the RNase H type-1 domain; that stretch reads MSDSVELYTD…ADQLANRGVD (142 aa). Mg(2+) contacts are provided by D10, E48, D70, and D134. Positions 129–148 are disordered; it reads GNERADQLANRGVDEVRAKR.

Belongs to the RNase H family. In terms of assembly, monomer. Mg(2+) is required as a cofactor.

It is found in the cytoplasm. It catalyses the reaction Endonucleolytic cleavage to 5'-phosphomonoester.. Functionally, endonuclease that specifically degrades the RNA of RNA-DNA hybrids. The polypeptide is Ribonuclease H (Pseudomonas putida (strain W619)).